We begin with the raw amino-acid sequence, 86 residues long: Large ribosomal subunit protein bL27 (86 aa).

Positions 1–11 are enriched in gly residues; that stretch reads MATKKAGGGSR. The disordered stretch occupies residues 1–24; sequence MATKKAGGGSRNGRDSAGRRLGVK.

Belongs to the bacterial ribosomal protein bL27 family.

The polypeptide is Large ribosomal subunit protein bL27 (Rickettsia africae (strain ESF-5)).